The following is an 85-amino-acid chain: Exodeoxyribonuclease 7 small subunit (85 aa).

This sequence belongs to the XseB family. As to quaternary structure, heterooligomer composed of large and small subunits.

It localises to the cytoplasm. The enzyme catalyses Exonucleolytic cleavage in either 5'- to 3'- or 3'- to 5'-direction to yield nucleoside 5'-phosphates.. Its function is as follows. Bidirectionally degrades single-stranded DNA into large acid-insoluble oligonucleotides, which are then degraded further into small acid-soluble oligonucleotides. The polypeptide is Exodeoxyribonuclease 7 small subunit (Mycobacterium bovis (strain ATCC BAA-935 / AF2122/97)).